The sequence spans 419 residues: Gamma-glutamyl phosphate reductase (419 aa).

This sequence belongs to the gamma-glutamyl phosphate reductase family.

It is found in the cytoplasm. The catalysed reaction is L-glutamate 5-semialdehyde + phosphate + NADP(+) = L-glutamyl 5-phosphate + NADPH + H(+). Its pathway is amino-acid biosynthesis; L-proline biosynthesis; L-glutamate 5-semialdehyde from L-glutamate: step 2/2. Its function is as follows. Catalyzes the NADPH-dependent reduction of L-glutamate 5-phosphate into L-glutamate 5-semialdehyde and phosphate. The product spontaneously undergoes cyclization to form 1-pyrroline-5-carboxylate. The polypeptide is Gamma-glutamyl phosphate reductase (Gloeobacter violaceus (strain ATCC 29082 / PCC 7421)).